The chain runs to 447 residues: MNKNTWIIGFTLFAMFFGAGNLIFPPNLGLESGQYFWPSILAFALTGIGLPLLGVIVGALDKQGYIGSLNKISPKFSIIFLIIIYLTIGPLFAIPRTASTSFEMTVTPIANTNSNLALFIFTVIYFLIVLYLCINPSRMVDRIGSLLTPLLLITILAMIVKGFVDYGSNSHSQATDAFTSNFSGFSQGFTNGYLTMDAIAAIAFSMIVVNAVKATGVTHANKIFKQTLMAGIIAAVALMFIYISLGYIGNHMAVSQEKIASLTANDQNIGTYLLTTMASVGFGTFGKYLLGIIVALACLTTACGLVVAVSEYFHRIFPRISYKIYVIIFTLISFILANQGLNSVITMSVPVLSIVYPIAITSVLLILLARFVPTKPIAQQIPVAIVSIVSILSMIHTQGWIKLSFIDSLPLKSYSLEWFPIAIVTTIIGYIVAAMVKKQKPIVYEKE.

Transmembrane regions (helical) follow at residues 6-26, 40-60, 74-94, 116-136, 143-163, 192-212, 228-248, 289-309, 324-344, 349-369, 381-401, and 416-436; these read WIIGFTLFAMFFGAGNLIFPP, ILAFALTGIGLPLLGVIVGAL, PKFSIIFLIIIYLTIGPLFAI, LALFIFTVIYFLIVLYLCINP, IGSLLTPLLLITILAMIVKGF, GYLTMDAIAAIAFSMIVVNAV, LMAGIIAAVALMFIYISLGYI, LLGIIVALACLTTACGLVVAV, IYVIIFTLISFILANQGLNSV, VPVLSIVYPIAITSVLLILLA, IPVAIVSIVSILSMIHTQGWI, and LEWFPIAIVTTIIGYIVAAMV.

This sequence belongs to the branched chain amino acid transporter family.

The protein localises to the cell membrane. In terms of biological role, component of the transport system for branched-chain amino acids (leucine, isoleucine and valine), which is coupled to a proton motive force. In Staphylococcus saprophyticus subsp. saprophyticus (strain ATCC 15305 / DSM 20229 / NCIMB 8711 / NCTC 7292 / S-41), this protein is Putative branched-chain amino acid carrier protein SSP1343.